Consider the following 100-residue polypeptide: Large ribosomal subunit protein bL27 (100 aa).

Positions 1 to 13 (MNKLYWLTDLQLF) are excised as a propeptide. Residues 18-29 (GVDSSKNGRDSN) show a composition bias toward basic and acidic residues. The segment at 18 to 39 (GVDSSKNGRDSNPKYLGAKLGD) is disordered.

The protein belongs to the bacterial ribosomal protein bL27 family. In terms of processing, the N-terminus is cleaved by ribosomal processing cysteine protease Prp.

In Ureaplasma urealyticum serovar 10 (strain ATCC 33699 / Western), this protein is Large ribosomal subunit protein bL27.